Consider the following 844-residue polypeptide: Meiotically up-regulated gene 61 protein (844 aa).

Disordered regions lie at residues 333 to 354 (ENNS…PQSQ) and 384 to 415 (NFGL…EISS). Residues 384-394 (NFGLEASNTST) show a composition bias toward polar residues. Over residues 395–407 (PEKKKFDSQKPDD) the composition is skewed to basic and acidic residues. Residues 459 to 479 (VVNSLWLVLLVVPLLGFVGFW) form a helical membrane-spanning segment. 605–612 (AKNLNGKS) serves as a coordination point for ATP. The helical transmembrane segment at 705 to 725 (VISCWRIYLLIGILAAITGTV) threads the bilayer.

In terms of assembly, interacts with sad1.

Its subcellular location is the endoplasmic reticulum membrane. The protein localises to the nucleus membrane. Functionally, required for correct meiotic chromosome segregation. In Schizosaccharomyces pombe (strain 972 / ATCC 24843) (Fission yeast), this protein is Meiotically up-regulated gene 61 protein (mug61).